A 246-amino-acid chain; its full sequence is 5-oxoprolinase subunit A (246 aa).

The protein belongs to the LamB/PxpA family. In terms of assembly, forms a complex composed of PxpA, PxpB and PxpC.

The enzyme catalyses 5-oxo-L-proline + ATP + 2 H2O = L-glutamate + ADP + phosphate + H(+). Functionally, catalyzes the cleavage of 5-oxoproline to form L-glutamate coupled to the hydrolysis of ATP to ADP and inorganic phosphate. The sequence is that of 5-oxoprolinase subunit A from Cupriavidus metallidurans (strain ATCC 43123 / DSM 2839 / NBRC 102507 / CH34) (Ralstonia metallidurans).